Consider the following 297-residue polypeptide: Pantothenate synthetase (297 aa).

Residue 30–37 (MGYLHAGH) participates in ATP binding. Residue histidine 37 is the Proton donor of the active site. (R)-pantoate is bound at residue glutamine 61. Glutamine 61 is a beta-alanine binding site. 147–150 (GEKD) is a binding site for ATP. Glutamine 153 contacts (R)-pantoate. Residues valine 176 and 184 to 187 (LSSR) each bind ATP.

Belongs to the pantothenate synthetase family. In terms of assembly, homodimer.

It localises to the cytoplasm. The catalysed reaction is (R)-pantoate + beta-alanine + ATP = (R)-pantothenate + AMP + diphosphate + H(+). It functions in the pathway cofactor biosynthesis; (R)-pantothenate biosynthesis; (R)-pantothenate from (R)-pantoate and beta-alanine: step 1/1. Functionally, catalyzes the condensation of pantoate with beta-alanine in an ATP-dependent reaction via a pantoyl-adenylate intermediate. This is Pantothenate synthetase from Rhizobium etli (strain ATCC 51251 / DSM 11541 / JCM 21823 / NBRC 15573 / CFN 42).